The sequence spans 296 residues: Probable endonuclease 4 (296 aa).

9 residues coordinate Zn(2+): histidine 68, histidine 109, glutamate 144, aspartate 178, histidine 181, histidine 213, aspartate 226, histidine 228, and glutamate 258.

The protein belongs to the AP endonuclease 2 family. Zn(2+) is required as a cofactor.

It carries out the reaction Endonucleolytic cleavage to 5'-phosphooligonucleotide end-products.. In terms of biological role, endonuclease IV plays a role in DNA repair. It cleaves phosphodiester bonds at apurinic or apyrimidinic (AP) sites, generating a 3'-hydroxyl group and a 5'-terminal sugar phosphate. The chain is Probable endonuclease 4 from Pediococcus pentosaceus (strain ATCC 25745 / CCUG 21536 / LMG 10740 / 183-1w).